The sequence spans 160 residues: uncharacterized protein (160 aa).

The protein belongs to the Dps family.

This is an uncharacterized protein from Haemophilus influenzae (strain ATCC 51907 / DSM 11121 / KW20 / Rd).